Here is a 201-residue protein sequence, read N- to C-terminus: Hydroxymethylphosphonate dioxygenase (201 aa).

Fe cation is bound by residues histidine 47, histidine 71, aspartate 72, histidine 94, histidine 117, and aspartate 174.

Requires Fe(2+) as cofactor.

The enzyme catalyses hydroxymethylphosphonate + O2 = formate + phosphate + 2 H(+). It carries out the reaction (1R)-(2-amino-1-hydroxyethyl)phosphonate + O2 = glycine + phosphate + 2 H(+). The catalysed reaction is (1R)-(1-hydroxyethyl)phosphonate + O2 = acetate + phosphate + 2 H(+). Its function is as follows. Part of an oxidative pathway for utilization of methylphosphonic acid as a phosphate source. Catalyzes the oxidation of hydroxymethylphosphonic acid to produce formate and phosphate. Can also use (1R)-(2-amino-1-hydroxyethyl)phosphonic acid and (R)-1-hydroxyethylphosphonic acid with similar catalytic efficiency. The polypeptide is Hydroxymethylphosphonate dioxygenase (Gimesia maris (strain ATCC 29201 / DSM 8797 / 534-30) (Planctomyces maris)).